Consider the following 161-residue polypeptide: Nucleotide-binding protein Bphyt_3208 (161 aa).

The protein belongs to the YajQ family.

In terms of biological role, nucleotide-binding protein. In Paraburkholderia phytofirmans (strain DSM 17436 / LMG 22146 / PsJN) (Burkholderia phytofirmans), this protein is Nucleotide-binding protein Bphyt_3208.